We begin with the raw amino-acid sequence, 203 residues long: Interferon type B (203 aa).

A signal peptide spans 1 to 27 (MTANHQSPGMHSILLLLLLPALTTTFS). Disulfide bonds link Cys-28–Cys-125 and Cys-57–Cys-164. N-linked (GlcNAc...) asparagine glycosylation is found at Asn-37 and Asn-160.

The protein belongs to the alpha/beta interferon family.

Its subcellular location is the secreted. Functionally, has antiviral activities. The polypeptide is Interferon type B (IFNB) (Gallus gallus (Chicken)).